Reading from the N-terminus, the 305-residue chain is Protoheme IX farnesyltransferase (305 aa).

Helical transmembrane passes span 31 to 51, 52 to 72, 96 to 118, 123 to 145, 151 to 171, 179 to 199, 225 to 245, 247 to 267, and 281 to 301; these read VMSL…YSVH, PFIA…AGAI, VIES…FFMA, LLAS…IWLK, NIVI…AAVS, IILF…LALF, ILIY…IGMN, FIYL…AGSL, and FAYS…TNTI.

It belongs to the UbiA prenyltransferase family. Protoheme IX farnesyltransferase subfamily.

Its subcellular location is the cell inner membrane. The enzyme catalyses heme b + (2E,6E)-farnesyl diphosphate + H2O = Fe(II)-heme o + diphosphate. The protein operates within porphyrin-containing compound metabolism; heme O biosynthesis; heme O from protoheme: step 1/1. In terms of biological role, converts heme B (protoheme IX) to heme O by substitution of the vinyl group on carbon 2 of heme B porphyrin ring with a hydroxyethyl farnesyl side group. This Rickettsia rickettsii (strain Iowa) protein is Protoheme IX farnesyltransferase.